The following is a 555-amino-acid chain: Glucose-6-phosphate isomerase (555 aa).

Catalysis depends on Glu355, which acts as the Proton donor. Active-site residues include His386 and Lys514.

Belongs to the GPI family.

The protein resides in the cytoplasm. The enzyme catalyses alpha-D-glucose 6-phosphate = beta-D-fructose 6-phosphate. It participates in carbohydrate biosynthesis; gluconeogenesis. Its pathway is carbohydrate degradation; glycolysis; D-glyceraldehyde 3-phosphate and glycerone phosphate from D-glucose: step 2/4. In terms of biological role, catalyzes the reversible isomerization of glucose-6-phosphate to fructose-6-phosphate. This Buchnera aphidicola subsp. Schizaphis graminum (strain Sg) protein is Glucose-6-phosphate isomerase.